Reading from the N-terminus, the 451-residue chain is UDP-N-acetylmuramoylalanine--D-glutamate ligase (451 aa).

119-125 (GSNGKTT) lines the ATP pocket.

The protein belongs to the MurCDEF family.

The protein localises to the cytoplasm. It catalyses the reaction UDP-N-acetyl-alpha-D-muramoyl-L-alanine + D-glutamate + ATP = UDP-N-acetyl-alpha-D-muramoyl-L-alanyl-D-glutamate + ADP + phosphate + H(+). It participates in cell wall biogenesis; peptidoglycan biosynthesis. Its function is as follows. Cell wall formation. Catalyzes the addition of glutamate to the nucleotide precursor UDP-N-acetylmuramoyl-L-alanine (UMA). This is UDP-N-acetylmuramoylalanine--D-glutamate ligase from Streptococcus agalactiae serotype III (strain NEM316).